Reading from the N-terminus, the 500-residue chain is NADH-quinone oxidoreductase subunit N (500 aa).

14 helical membrane-spanning segments follow: residues 13–33, 42–62, 79–99, 111–131, 133–153, 168–188, 211–231, 245–265, 281–301, 321–341, 342–362, 386–406, 424–444, and 461–481; these read VMMP…IDLF, LLGL…LSLW, FAKS…LLSI, GEFY…ASSG, LITL…LVAI, VITG…IFGF, YVLS…LASA, TTPV…VIVL, ASML…TMII, VAHA…MFEA, IWFY…ILQV, AIAM…AGFI, VLAS…FGIF, and PPGV…LGVF.

It belongs to the complex I subunit 2 family. NDH-1 is composed of 14 different subunits. Subunits NuoA, H, J, K, L, M, N constitute the membrane sector of the complex.

Its subcellular location is the cell membrane. The enzyme catalyses a quinone + NADH + 5 H(+)(in) = a quinol + NAD(+) + 4 H(+)(out). Its function is as follows. NDH-1 shuttles electrons from NADH, via FMN and iron-sulfur (Fe-S) centers, to quinones in the respiratory chain. The immediate electron acceptor for the enzyme in this species is believed to be a menaquinone. Couples the redox reaction to proton translocation (for every two electrons transferred, four hydrogen ions are translocated across the cytoplasmic membrane), and thus conserves the redox energy in a proton gradient. This Anoxybacillus flavithermus (strain DSM 21510 / WK1) protein is NADH-quinone oxidoreductase subunit N.